The primary structure comprises 314 residues: tRNA dimethylallyltransferase (314 aa).

An ATP-binding site is contributed by 13–20; it reads GPTASGKS. A substrate-binding site is contributed by 15–20; it reads TASGKS. Interaction with substrate tRNA stretches follow at residues 38–41 and 161–165; these read DSMQ and QRIAR.

The protein belongs to the IPP transferase family. As to quaternary structure, monomer. Mg(2+) serves as cofactor.

It catalyses the reaction adenosine(37) in tRNA + dimethylallyl diphosphate = N(6)-dimethylallyladenosine(37) in tRNA + diphosphate. In terms of biological role, catalyzes the transfer of a dimethylallyl group onto the adenine at position 37 in tRNAs that read codons beginning with uridine, leading to the formation of N6-(dimethylallyl)adenosine (i(6)A). In Parvibaculum lavamentivorans (strain DS-1 / DSM 13023 / NCIMB 13966), this protein is tRNA dimethylallyltransferase.